Reading from the N-terminus, the 249-residue chain is Syntaxin-10 (249 aa).

At S2 the chain carries N-acetylserine. The Cytoplasmic portion of the chain corresponds to 2-228 (SLEDPFFVVR…VSHMTSDRRQ (227 aa)). Residues 41-69 (EELDWTTNELRNGLRSIEWDLEDLEETIG) are a coiled coil. S108 is modified (phosphoserine). T110 is modified (phosphothreonine). 3 positions are modified to phosphoserine: S134, S140, and S143. One can recognise a t-SNARE coiled-coil homology domain in the interval 157-219 (QLIMDEQDQQ…DGVLRKLAKV (63 aa)). Residues 229 to 249 (WCAIAVLVGVLLLVLILLFSL) traverse the membrane as a helical; Anchor for type IV membrane protein segment.

It belongs to the syntaxin family. Interacts with VPS52. Expressed at high levels in heart, skeletal muscle and pancreas.

It is found in the golgi apparatus membrane. Its function is as follows. SNARE involved in vesicular transport from the late endosomes to the trans-Golgi network. In Homo sapiens (Human), this protein is Syntaxin-10 (STX10).